The sequence spans 160 residues: Probable transcriptional regulator YgiV (160 aa).

In terms of biological role, represses expression of mcbR. This Escherichia coli O157:H7 protein is Probable transcriptional regulator YgiV (ygiV).